The chain runs to 541 residues: Transcription factor STP2 (541 aa).

The interval 13 to 32 is i; sequence VLTRIYDYLKALVQQVIVPN. The segment at 35-58 is disordered; it reads DDKSSKSTPFEKLEPAKQNHPQKD. Residues 73-105 form an II region; that stretch reads LFPKQNNKQLSLTSKSSVVPCALNLDNLETPFS. The segment at 204–226 adopts a C2H2-type 1 zinc-finger fold; it reads YICHYCDARFRIRGYLTRHIKKH. The C2H2-type 2; atypical zinc finger occupies 232 to 267; sequence YHCPFFDNSISQELRCHTSGGFSRRDTYKTHLKSRH. Residues 284–309 form a C2H2-type 3; atypical zinc finger; sequence GVCTQCGEHFSTSESWVENHIEAGSC. Over residues 452–462 the composition is skewed to low complexity; the sequence is SSASSALSPLS. The tract at residues 452–497 is disordered; that stretch reads SSASSALSPLSGDPITTTETNKSYPLDSEQSLLEPDKTEEDAINQS. Over residues 465–482 the composition is skewed to polar residues; sequence PITTTETNKSYPLDSEQS.

As to quaternary structure, interacts (via Region II) with SSY5; protease component of the SPS-sensor. Activated by the amino acid-induced proteolytic removal of an N-terminal inhibitory domain by serine protease SSY5, an intrinsic component of the SPS-sensor. Processing requires at least 2 components of the SCF(GRR1) ubiquitin ligase complex, namely the F-box protein GRR1 and the E2 enzyme CDC34, but does not depend on the proteasome. Processing is negatively regulated by the protein phosphatase 2A regulatory subunit RTS1.

The protein resides in the cell membrane. It localises to the nucleus. Functionally, transcription factor involved in the regulation of gene expression in response to extracellular amino acid levels. Synthesized as latent cytoplasmic precursor, which, upon a signal initiated by the plasma membrane SPS (SSY1-PTR3-SSY5) amino acid sensor system, becomes proteolytically activated and relocates to the nucleus, where it induces the expression of SPS-sensor-regulated genes, including the amino-acid permeases BAP2 and BAP3. Binding to promoters is facilitated by DAL81. Involved in the repression of genes subject to nitrogen catabolite repression and genes involved in stress response. Negatively regulated by inner nuclear membrane proteins ASI1, ASI2 and ASI3, which prevent unprocessed precursor forms that escape cytoplasmic anchoring from inducing SPS-sensor-regulated genes. This is Transcription factor STP2 (STP2) from Saccharomyces cerevisiae (strain ATCC 204508 / S288c) (Baker's yeast).